The primary structure comprises 159 residues: Protein Smg homolog (159 aa).

It belongs to the Smg family.

In Nitrosococcus oceani (strain ATCC 19707 / BCRC 17464 / JCM 30415 / NCIMB 11848 / C-107), this protein is Protein Smg homolog.